Here is a 765-residue protein sequence, read N- to C-terminus: Ankyrin repeat and protein kinase domain-containing protein 1 (765 aa).

The Protein kinase domain maps to 22–289 (EGDWRLVASG…DITIETDILL (268 aa)). Residues 28–36 (VASGGFSQV) and Lys-51 each bind ATP. Asp-145 acts as the Proton acceptor in catalysis. 12 ANK repeats span residues 361 to 390 (NKVT…DVDC), 394 to 423 (SGYT…DANR), 427 to 456 (DGWA…CVDA), 460 to 489 (EGWT…DPNL), 493 to 522 (EGKT…ELDA), 526 to 555 (NLRT…VPDA), 559 to 588 (SGYG…SLEL), 592 to 621 (QGWT…NMGA), 625 to 654 (VNWT…DPNA), 658 to 687 (SGWT…NVHA), 691 to 720 (VGWT…QLDV), and 724 to 753 (VSCT…SVAT).

The protein belongs to the protein kinase superfamily. TKL Ser/Thr protein kinase family. As to expression, highly expressed in brain and weakly expressed in placenta and spinal cord.

The enzyme catalyses L-seryl-[protein] + ATP = O-phospho-L-seryl-[protein] + ADP + H(+). It catalyses the reaction L-threonyl-[protein] + ATP = O-phospho-L-threonyl-[protein] + ADP + H(+). This is Ankyrin repeat and protein kinase domain-containing protein 1 (ANKK1) from Homo sapiens (Human).